The primary structure comprises 620 residues: Glutathione-regulated potassium-efflux system protein KefC (620 aa).

Helical transmembrane passes span 4-24 (HTLMQALIYLGSAALIVPIAV), 26-46 (LGLGSVLGYLIAGCIIGPWGL), 54-74 (SILHFAEIGVVLMLFVIGLEL), 90-110 (GALQMVICGGLIGFFCMFLGL), 114-134 (VAELIGMTLALSSTAIAMQAM), 149-169 (FAVLLFQDIAAIPLVAMIPLL), 178-198 (LGAFALSALKVAGALALVVLL), 218-238 (VFSAVALFLVFGFGLLLEEVG), 270-290 (GLLLGLFFIGVGMSIDFGTLV), 294-314 (LRILLLLAGFLAIKIVMLWLI), 327-347 (WFAVLLGQGSEFAFVVFGAAQ), and 359-379 (ALTLAVALSMAATPIFLVLLT). The 120-residue stretch at 399–518 (QPRVIVAGFG…AGVAMPERET (120 aa)) folds into the RCK N-terminal domain. The disordered stretch occupies residues 599–620 (QGTAEGKHTGDIADEPQVKPST).

It belongs to the monovalent cation:proton antiporter 2 (CPA2) transporter (TC 2.A.37) family. KefC subfamily. As to quaternary structure, homodimer. Interacts with the regulatory subunit KefF.

The protein localises to the cell inner membrane. In terms of biological role, pore-forming subunit of a potassium efflux system that confers protection against electrophiles. Catalyzes K(+)/H(+) antiport. The protein is Glutathione-regulated potassium-efflux system protein KefC of Salmonella arizonae (strain ATCC BAA-731 / CDC346-86 / RSK2980).